The sequence spans 443 residues: Phosphoglucosamine mutase (443 aa).

Catalysis depends on Ser-101, which acts as the Phosphoserine intermediate. Ser-101, Asp-240, Asp-242, and Asp-244 together coordinate Mg(2+). Ser-101 carries the phosphoserine modification.

It belongs to the phosphohexose mutase family. The cofactor is Mg(2+). Post-translationally, activated by phosphorylation.

It catalyses the reaction alpha-D-glucosamine 1-phosphate = D-glucosamine 6-phosphate. Its function is as follows. Catalyzes the conversion of glucosamine-6-phosphate to glucosamine-1-phosphate. This is Phosphoglucosamine mutase from Psychromonas ingrahamii (strain DSM 17664 / CCUG 51855 / 37).